Here is a 45-residue protein sequence, read N- to C-terminus: Myotoxin-2 (45 aa).

Cystine bridges form between Cys4–Cys36, Cys11–Cys30, and Cys18–Cys37.

This sequence belongs to the crotamine-myotoxin family. As to quaternary structure, monomer. In terms of tissue distribution, expressed by the venom gland.

It localises to the secreted. Its function is as follows. Cationic peptide that possesses multiple functions. It acts as a cell-penetrating peptide (CPP), and as a potent voltage-gated potassium channel (Kv) inhibitor. It exhibits antimicrobial activities, hind limb paralysis, and severe muscle necrosis by a non-enzymatic mechanism. This chain is Myotoxin-2, found in Crotalus viridis viridis (Prairie rattlesnake).